We begin with the raw amino-acid sequence, 1370 residues long: Histidine kinase P4 (1370 aa).

The first 20 residues, 1–20, serve as a signal peptide directing secretion; it reads MRNIGVFSVILFSFLAISLK. Residues 799–819 traverse the membrane as a helical segment; it reads WAFCLYALCIGTALIALISFL. In terms of domain architecture, Histidine kinase spans 852-1072; the sequence is NISHEFRTPL…IFRVSLPLGR (221 aa). Phosphohistidine; by autocatalysis is present on histidine 855. The region spanning 1119-1234 is the Response regulatory domain; it reads TILIVEDHKP…EFRLRIKNIL (116 aa). Position 1167 is a 4-aspartylphosphate (aspartate 1167). Positions 1266–1365 constitute an HTH araC/xylS-type domain; the sequence is KKAFKIVEDN…NETPSQYQNR (100 aa). 2 DNA-binding regions (H-T-H motif) span residues 1284–1305 and 1332–1355; these read LAFS…KAWT and ISQI…QKKF.

In terms of processing, autophosphorylated. Activation requires a sequential transfer of a phosphate group from a His in the primary transmitter domain, to an Asp in the receiver domain and to a His in the secondary transmitter domain.

The protein resides in the membrane. It localises to the cell surface. It carries out the reaction ATP + protein L-histidine = ADP + protein N-phospho-L-histidine.. Histidine kinase probably involved in ulvan degradation. Ulvan is the main polysaccharide component of the Ulvales (green seaweed) cell wall. It is composed of disaccharide building blocks comprising 3-sulfated rhamnose (Rha3S) linked to D-glucuronic acid (GlcA), L-iduronic acid (IduA), or D-xylose (Xyl). The chain is Histidine kinase P4 from Formosa agariphila (strain DSM 15362 / KCTC 12365 / LMG 23005 / KMM 3901 / M-2Alg 35-1).